The chain runs to 440 residues: MSEFSQTVPELVAWARKNDFSISLPVDRLSFLLAIATLNGERLEGEMSEGELVDAFRHVSDAFEQTSETISQRANNAINDLVRQRLLNRFTSEITEGNAIYRLTPLGIGITDYYIRQREFSTLRLSMQLSIVAGELKRAADAAEEGGDEFHWHRNVFAPLKYSVAEIFDSIDLTQRIMDEQQQLVKDDIAQLLNKDWRAAISSCELLLSETSGTLRELQDTLDAAGDKLQANLLRIQDSTMARDDLHFVDRLVFDLQSKLDRIVSWGQQAIDLWIGYDRHVHKFIRTAIDMDKNRVFAQRLRQSVQTYFDEPWALTYANADRLLDMRDEEMALRDEEVTGELPADLEFEEFNEIREQLAALIEAQLAVYKEKGIPLDLGLVAREFLAQYPRGRHFDVARIVVDQAVQLGVAQADFTGLPAKWQPINDYGAKVQAHVIDKY.

The segment at 208–236 (LSETSGTLRELQDTLDAAGDKLQANLLRI) is leucine-zipper.

This sequence belongs to the MukF family. In terms of assembly, interacts, and probably forms a ternary complex, with MukE and MukB via its C-terminal region. The complex formation is stimulated by calcium or magnesium. It is required for an interaction between MukE and MukB.

It localises to the cytoplasm. It is found in the nucleoid. In terms of biological role, involved in chromosome condensation, segregation and cell cycle progression. May participate in facilitating chromosome segregation by condensation DNA from both sides of a centrally located replisome during cell division. Not required for mini-F plasmid partitioning. Probably acts via its interaction with MukB and MukE. Overexpression results in anucleate cells. It has a calcium binding activity. The protein is Chromosome partition protein MukF of Klebsiella pneumoniae subsp. pneumoniae (strain ATCC 700721 / MGH 78578).